The sequence spans 323 residues: Flavone synthase cfoJ (323 aa).

FMN serves as cofactor.

The protein operates within secondary metabolite biosynthesis; flavonoid biosynthesis. Its function is as follows. FMN-dependent oxidoreductase; part of the gene cluster that mediates the biosynthesis of chlorflavonin, a fungal flavonoid with acetolactate synthase inhibitory activity. Within the pathway, cfoJ acts as a flavone synthase (FNS) and catalyzes the formation of a double bond between C2 and C3, converting the flavanone into a flavone. The pathway begins with the PKS-NRPS hybrid synthetase cfoA that uses benzoic acid or p-hydroxybenzoic acid as a starter unit with four rounds of chain elongation using malonyl-CoA to form the chalcone skeleton. Then, a new type of chalcone isomerase, cfoK, catalyzes the conversion of the chalcone into a flavanone by a histidine-mediated oxa-Michael addition mechanism. The desaturation of flavanone to flavone is catalyzed by a new type of flavone synthase, the flavin mononucleotide (FMN)-dependent oxidoreductase cfoJ. Monooxygenases cfoF, cfoG, and P450 cfoH are responsible for the hydroxylation of the flavonoid skeleton at sites C3, C8, and C2', respectively. Like cfoF, the dehydratase cfoI plays also a role in the hydroxylation of position C3. Methyltransferases cfoB, cfoC, and cfoD then catalyze the methylation of C7-OH, C8-OH, and C3-OH, respectively. Finally, the monooxygenase cfoE is responsible for the chlorination of flavonoid at position C3'. The protein is Flavone synthase cfoJ of Aspergillus candidus.